The chain runs to 511 residues: Zinc finger and BTB domain-containing protein 45 (511 aa).

The region spanning 33 to 96 is the BTB domain; sequence CDVTVRIREA…LYSGSLVVAQ (64 aa). The segment covering 159 to 168 has biased composition (low complexity); sequence ARPPGHPGAA. Disordered regions lie at residues 159–241 and 294–403; these read ARPP…PDCA and EDGA…PPTY. Acidic residues predominate over residues 206-224; sequence RGDEDDEESDDETDGEDGE. Positions 339-360 are enriched in pro residues; the sequence is PGPPAPPPSAPSGPAPAPPPAF. The segment covering 378 to 397 has biased composition (low complexity); that stretch reads PAPSAAPTTAPSGTPARTPG. 4 C2H2-type zinc fingers span residues 403-425, 431-453, 459-481, and 486-508; these read YECSHCRKTFSSRKNYTKHMFIH, HQCAVCWRSFSLRDYLLKHMVTH, FQCAVCAKRFTQKSSLNVHMRTH, and APCPACGKVFSHRALLERHLAAH.

This sequence belongs to the krueppel C2H2-type zinc-finger protein family.

The protein localises to the nucleus. May be involved in transcriptional regulation. In the central nervous system, may play a role in glial cell differentiation. The polypeptide is Zinc finger and BTB domain-containing protein 45 (ZBTB45) (Homo sapiens (Human)).